The primary structure comprises 701 residues: Serologically defined colon cancer antigen 8 homolog (701 aa).

The segment covering 1–13 (MKPSLESDEEEEL) has biased composition (acidic residues). Disordered stretches follow at residues 1-67 (MKPS…VQQS) and 84-114 (ANIQ…GVHN). The segment covering 45–67 (SEPNQQELLSSVQQNPCSPVQQS) has biased composition (polar residues). Coiled coils occupy residues 119-173 (INNQ…LKEY), 203-258 (HKWR…AVAA), and 323-695 (QQVK…AGKR). Residues 364-387 (LASEQDKISQAREAARSESKKERE) form a disordered region.

The protein localises to the cytoplasm. It is found in the cytoskeleton. Its subcellular location is the microtubule organizing center. The protein resides in the centrosome. It localises to the centriole. The protein localises to the cilium basal body. It is found in the cell junction. Functionally, plays a role in the establishment of cell polarity and epithelial lumen formation. Also plays an essential role in ciliogenesis and subsequent Hedgehog signaling pathway that requires the presence of intact primary cilia for pathway activation. Mechanistically, interacts with and mediates RABEP2 centrosomal localization which is critical for ciliogenesis. This chain is Serologically defined colon cancer antigen 8 homolog (Sdccag8), found in Danio rerio (Zebrafish).